The sequence spans 251 residues: L-xylulose reductase (251 aa).

Position 13–42 (13–42 (LVTGASQGIGKEICLSLAKAGAQVIAFARN)) interacts with NADP(+). Substrate is bound at residue S143. The active-site Proton acceptor is Y156. K160 lines the NADP(+) pocket.

Belongs to the short-chain dehydrogenases/reductases (SDR) family. In terms of assembly, homotetramer. As to expression, expressed in intestine, gonad and spermatids (at protein level). Expressed in intestine, uterine seam, gonadal sheath cells, spermathecal-uterus valve and spermatids.

The protein localises to the cell membrane. The catalysed reaction is xylitol + NADP(+) = L-xylulose + NADPH + H(+). With respect to regulation, strongly inhibited by 10% dimethyl sulfoxide. Functionally, catalyzes the NADPH-dependent reduction of L-xylulose, D-xylulose, L-(+) erythrulose, D-erythrose, D-threose, L-ribulose, 1,4-dibromo-2,3-butanedione and 2,3-heptanedione. Also active against isatin, 9,10-phenanthrenequinone, menadione, 2,3-hexaenadione and 3,4-hexahenadione. No activity observed when tested using NADH rather than NADPH. The protein is L-xylulose reductase of Caenorhabditis elegans.